The primary structure comprises 174 residues: Crossover junction endodeoxyribonuclease RuvC (174 aa).

Active-site residues include D8, E69, and D141. Positions 8, 69, and 141 each coordinate Mg(2+).

It belongs to the RuvC family. Homodimer which binds Holliday junction (HJ) DNA. The HJ becomes 2-fold symmetrical on binding to RuvC with unstacked arms; it has a different conformation from HJ DNA in complex with RuvA. In the full resolvosome a probable DNA-RuvA(4)-RuvB(12)-RuvC(2) complex forms which resolves the HJ. Mg(2+) serves as cofactor.

It localises to the cytoplasm. The enzyme catalyses Endonucleolytic cleavage at a junction such as a reciprocal single-stranded crossover between two homologous DNA duplexes (Holliday junction).. Its function is as follows. The RuvA-RuvB-RuvC complex processes Holliday junction (HJ) DNA during genetic recombination and DNA repair. Endonuclease that resolves HJ intermediates. Cleaves cruciform DNA by making single-stranded nicks across the HJ at symmetrical positions within the homologous arms, yielding a 5'-phosphate and a 3'-hydroxyl group; requires a central core of homology in the junction. The consensus cleavage sequence is 5'-(A/T)TT(C/G)-3'. Cleavage occurs on the 3'-side of the TT dinucleotide at the point of strand exchange. HJ branch migration catalyzed by RuvA-RuvB allows RuvC to scan DNA until it finds its consensus sequence, where it cleaves and resolves the cruciform DNA. This is Crossover junction endodeoxyribonuclease RuvC from Xanthomonas campestris pv. campestris (strain 8004).